Reading from the N-terminus, the 382-residue chain is Intermediate transcription factor 3 large subunit (382 aa).

The protein belongs to the poxviruses A23 family. Heterodimer of a 45 kDa and a 32 kDa subunit.

Its function is as follows. Acts with RNA polymerase to initiate transcription from intermediate gene promoters. This chain is Intermediate transcription factor 3 large subunit (VITF3L), found in Camelus.